Reading from the N-terminus, the 360-residue chain is Peptide chain release factor 1 (360 aa).

Gln-236 carries the N5-methylglutamine modification.

This sequence belongs to the prokaryotic/mitochondrial release factor family. In terms of processing, methylated by PrmC. Methylation increases the termination efficiency of RF1.

The protein resides in the cytoplasm. Functionally, peptide chain release factor 1 directs the termination of translation in response to the peptide chain termination codons UAG and UAA. The protein is Peptide chain release factor 1 of Methylococcus capsulatus (strain ATCC 33009 / NCIMB 11132 / Bath).